The sequence spans 676 residues: Protein TAPT1 homolog (676 aa).

Residues 1–44 (MNATLNSAGGKRQLRFRGDVTGSRVEELHHQQQEEQKQKAPLAQ) form a disordered region. Basic and acidic residues predominate over residues 24-38 (RVEELHHQQQEEQKQ). 6 helical membrane-spanning segments follow: residues 128 to 148 (SFLY…WALV), 170 to 190 (EICD…MLLV), 249 to 269 (VLTH…LIMF), 346 to 366 (FCVM…IDWV), 414 to 434 (GFIP…AVSF), and 437 to 457 (LAAW…RICL). Positions 625–676 (SGDGVTSAKAKKATQRLPKRTHKRSESEPGMPSMVEKGGAAGIAGGNQTTQL) are disordered. Positions 633–647 (KAKKATQRLPKRTHK) are enriched in basic residues.

It belongs to the TAPT1 family.

Its subcellular location is the membrane. In Drosophila melanogaster (Fruit fly), this protein is Protein TAPT1 homolog.